Reading from the N-terminus, the 938-residue chain is Isoleucine--tRNA ligase (938 aa).

The short motif at 58–68 (PYANGHLHMGH) is the 'HIGH' region element. Glu566 provides a ligand contact to L-isoleucyl-5'-AMP. A 'KMSKS' region motif is present at residues 607–611 (KMSKS). Lys610 serves as a coordination point for ATP. Zn(2+) contacts are provided by Cys906, Cys909, Cys926, and Cys929.

The protein belongs to the class-I aminoacyl-tRNA synthetase family. IleS type 1 subfamily. In terms of assembly, monomer. The cofactor is Zn(2+).

Its subcellular location is the cytoplasm. It carries out the reaction tRNA(Ile) + L-isoleucine + ATP = L-isoleucyl-tRNA(Ile) + AMP + diphosphate. In terms of biological role, catalyzes the attachment of isoleucine to tRNA(Ile). As IleRS can inadvertently accommodate and process structurally similar amino acids such as valine, to avoid such errors it has two additional distinct tRNA(Ile)-dependent editing activities. One activity is designated as 'pretransfer' editing and involves the hydrolysis of activated Val-AMP. The other activity is designated 'posttransfer' editing and involves deacylation of mischarged Val-tRNA(Ile). This chain is Isoleucine--tRNA ligase, found in Desulfovibrio desulfuricans (strain ATCC 27774 / DSM 6949 / MB).